The primary structure comprises 478 residues: Protein nucleotidyltransferase YdiU (478 aa).

8 residues coordinate ATP: glycine 84, glycine 86, arginine 87, lysine 107, aspartate 119, glycine 120, arginine 170, and arginine 177. Aspartate 246 serves as the catalytic Proton acceptor. 2 residues coordinate Mg(2+): asparagine 247 and aspartate 256. Aspartate 256 contributes to the ATP binding site.

The protein belongs to the SELO family. Requires Mg(2+) as cofactor. Mn(2+) is required as a cofactor.

The enzyme catalyses L-seryl-[protein] + ATP = 3-O-(5'-adenylyl)-L-seryl-[protein] + diphosphate. It carries out the reaction L-threonyl-[protein] + ATP = 3-O-(5'-adenylyl)-L-threonyl-[protein] + diphosphate. It catalyses the reaction L-tyrosyl-[protein] + ATP = O-(5'-adenylyl)-L-tyrosyl-[protein] + diphosphate. The catalysed reaction is L-histidyl-[protein] + UTP = N(tele)-(5'-uridylyl)-L-histidyl-[protein] + diphosphate. The enzyme catalyses L-seryl-[protein] + UTP = O-(5'-uridylyl)-L-seryl-[protein] + diphosphate. It carries out the reaction L-tyrosyl-[protein] + UTP = O-(5'-uridylyl)-L-tyrosyl-[protein] + diphosphate. In terms of biological role, nucleotidyltransferase involved in the post-translational modification of proteins. It can catalyze the addition of adenosine monophosphate (AMP) or uridine monophosphate (UMP) to a protein, resulting in modifications known as AMPylation and UMPylation. The protein is Protein nucleotidyltransferase YdiU of Shigella sonnei (strain Ss046).